The primary structure comprises 1146 residues: Ankyrin repeat and fibronectin type-III domain-containing protein 1 (1146 aa).

ANK repeat units lie at residues 133–162 and 170–199; these read QGNE…PEEL and EGLT…RESP. One can recognise a Fibronectin type-III domain in the interval 270 to 366; it reads MPTNVCLMVT…TTTPACASPS (97 aa). The segment at 607–614 is highly conserved peptide sequence; that stretch reads GLYLGYLK. Disordered regions lie at residues 855–887, 945–964, and 1106–1146; these read NSTS…QPCS, VKTP…NPDH, and PWAS…SSML. The segment covering 1131–1146 has biased composition (polar residues); the sequence is EGPTASPMSEILSSML.

Its function is as follows. May play a role in neuronal function. The chain is Ankyrin repeat and fibronectin type-III domain-containing protein 1 from Homo sapiens (Human).